A 457-amino-acid polypeptide reads, in one-letter code: Variant surface glycoprotein 20 (457 aa).

A signal peptide spans 1–20 (MFTQAVIALIGLVSIRTGKT). Positions 385-397 (RQTASGDDQSAEN) are enriched in polar residues. The disordered stretch occupies residues 385–406 (RQTASGDDQSAENQCGGKKEDE). N-linked (GlcNAc...) asparagine glycosylation is present at asparagine 436. Serine 440 carries the GPI-anchor amidated serine lipid modification. Residues 441 to 457 (NSFVIKKAPLWLAFLLF) constitute a propeptide, removed in mature form.

The protein localises to the cell membrane. Functionally, VSG forms a coat on the surface of the parasite. The trypanosome evades the immune response of the host by expressing a series of antigenically distinct VSGs from an estimated 1000 VSG genes. The protein is Variant surface glycoprotein 20 of Trypanosoma equiperdum.